Reading from the N-terminus, the 846-residue chain is Exonuclease 1 (846 aa).

Residues 1–99 are N-domain; the sequence is MGIQGLLQFI…RSRRERRQAN (99 aa). Asp30, Asp78, Glu150, Asp152, Asp171, Asp173, Asp225, and Asp270 together coordinate Mg(2+). The tract at residues 129–387 is interaction with MSH3; it reads MAHKVIKAAR…RPESGTVSDA (259 aa). The I-domain stretch occupies residues 138-229; sequence RSQGVDCLVA…ILSGCDYLSS (92 aa). The interval 372–396 is disordered; that stretch reads HRNYSPRPESGTVSDAPQLKENPST. Ser376 bears the Phosphoserine mark. Polar residues predominate over residues 382 to 396; it reads GTVSDAPQLKENPST. The interval 388–490 is interaction with MLH1; that stretch reads PQLKENPSTV…NKFATFLQRK (103 aa). Residues 418–421 carry the Nuclear localization signal motif; it reads KRPR. Ser422 and Ser454 each carry phosphoserine. At Lys482 the chain carries N6-acetyllysine. Phosphothreonine is present on Thr581. Ser598 and Ser610 each carry phosphoserine. The segment at 600–846 is interaction with MSH2; it reads PTLGTLRSCF…CGRVQRAIFQ (247 aa). Positions 618 to 781 are disordered; the sequence is FSRTPSPSPS…SIQKRKHHNA (164 aa). 2 stretches are compositionally biased toward polar residues: residues 620 to 631 and 639 to 654; these read RTPSPSPSTALQ and SPTS…VSQL. Thr621 is subject to Phosphothreonine. Ser623, Ser639, Ser660, and Ser674 each carry phosphoserine. The segment covering 655–671 has biased composition (basic and acidic residues); that stretch reads KSEESSDDESHPLREEA. Composition is skewed to polar residues over residues 672–689, 713–722, and 743–754; these read CSSQ…SSNA, DSQSDQTSKL, and KSSSADSLSTTK. Phosphoserine; by ATR is present on Ser714. A Phosphoserine modification is found at Ser746. The interaction with MLH1 stretch occupies residues 787 to 846; sequence LQIKLNELWKNFGFKKDSEKLPPCKKPLSPVRDNIQLTPEAEEDIFNKPECGRVQRAIFQ.

This sequence belongs to the XPG/RAD2 endonuclease family. EXO1 subfamily. As to quaternary structure, interacts with the MLH1-PMS2 heterodimer via MLH1. Interacts with MSH3. Interacts with the MSH2-MSH6 heterodimer via MSH2, and this interaction may increase the processivity of the 5'-&gt;3' exonuclease activity. Interacts with PCNA, and this interaction may both stimulate the cryptic 3'-&gt;5' exonuclease activity and suppress the 5'-&gt;3' exonuclease activity. Interacts with WRN, and this interaction stimulates both the 5'-&gt;3' exonuclease activity and cleavage of 5'-overhanging flap structures. Interacts with RECQL/RECQ1, and this interaction stimulates cleavage of 5'-overhanging flap structures. Interacts with DNA helicase ZGRF1; the interaction is increased following DNA damage induction. Mg(2+) serves as cofactor. Post-translationally, phosphorylated upon DNA damage and in response to agents stalling DNA replication, probably by ATM or ATR. Phosphorylation at Ser-454, Thr-621 and Ser-714 is induced upon DNA-damage caused by treatment with hydroxyurea (HU) but not upon IR treatment. The HU-induced EXO1 triple phosphorylation facilitates destabilization/degradation of the protein. In terms of tissue distribution, highly expressed in bone marrow, testis and thymus. Expressed at lower levels in colon, lymph nodes, ovary, placenta, prostate, small intestine, spleen and stomach.

It localises to the nucleus. Functionally, 5'-&gt;3' double-stranded DNA exonuclease which may also possess a cryptic 3'-&gt;5' double-stranded DNA exonuclease activity. Functions in DNA mismatch repair (MMR) to excise mismatch-containing DNA tracts directed by strand breaks located either 5' or 3' to the mismatch. Also exhibits endonuclease activity against 5'-overhanging flap structures similar to those generated by displacement synthesis when DNA polymerase encounters the 5'-end of a downstream Okazaki fragment. Required for somatic hypermutation (SHM) and class switch recombination (CSR) of immunoglobulin genes. Essential for male and female meiosis. In Homo sapiens (Human), this protein is Exonuclease 1 (EXO1).